The primary structure comprises 391 residues: PPE family protein PPE18 (391 aa).

This sequence belongs to the mycobacterial PPE family. As to quaternary structure, interacts with human TLR2.

The protein resides in the secreted. It localises to the cell wall. The protein localises to the cell surface. Its function is as follows. Could be a crucial virulence factor for intracellular survival of M.tuberculosis. Favors development of Th2-type response, and down-regulates the pro-inflammatory and Th1-type response. Specifically interacts with the human Toll-like receptor 2 (TLR2), leading to an early and sustained activation of p38 MAPK, which induces IL-10 production and activates Th2-type immune response. Also inhibits pro-inflammatory cytokines IL-12p40 and TNF-alpha production. Acts by up-regulating the expression as well as tyrosine phosphorylation of suppressor of cytokine signaling 3 (SOCS-3), leading to the inhibition of phosphorylation of I-kappa-B-alpha, thereby preventing nuclear translocation of the NF-kappa-B/REL subunits and expression of NF-kappa-B regulated genes like IL-12 and TNF-alpha. Induction of SOCS-3 probably depends on the activation of p38 MAPK. The chain is PPE family protein PPE18 from Mycobacterium tuberculosis (strain ATCC 25618 / H37Rv).